Reading from the N-terminus, the 229-residue chain is Geodin cluster transcription factor (229 aa).

A DNA-binding region (zn(2)-C6 fungal-type) is located at residues 12-39 (CHACAASKVRCSKEKPTCSRCSKRGTTC). 2 disordered regions span residues 50–100 (KQLN…PGTT) and 141–169 (TANSEPLDAEGGITSSHNTSSNSPARPPT). Polar residues-rich tracts occupy residues 51–71 (QLNNRSTAKESSNTTRTSLAT) and 153–164 (ITSSHNTSSNSP).

Its subcellular location is the nucleus. Transcription factor that regulates the expression of the gene cluster that mediates the biosynthesis of geodin, an intermediate in the biosynthesis of other natural products. In Aspergillus terreus (strain NIH 2624 / FGSC A1156), this protein is Geodin cluster transcription factor.